Reading from the N-terminus, the 178-residue chain is Putative peroxiredoxin in rubredoxin operon (178 aa).

The Thioredoxin domain maps to 3 to 163 (RLVGKPAPEF…TLRVLKAFQT (161 aa)). Cys-50 serves as the catalytic Cysteine sulfenic acid (-SOH) intermediate.

This sequence belongs to the peroxiredoxin family. AhpC/Prx1 subfamily. In terms of assembly, homodimer; disulfide-linked, upon oxidation.

The protein localises to the cytoplasm. It catalyses the reaction a hydroperoxide + [protein]-dithiol = [protein]-disulfide + an alcohol + H2O. Functionally, thiol-specific peroxidase that catalyzes the reduction of hydrogen peroxide and organic hydroperoxides to water and alcohols, respectively. Plays a role in cell protection against oxidative stress by detoxifying peroxides. The protein is Putative peroxiredoxin in rubredoxin operon of Clostridium pasteurianum.